Reading from the N-terminus, the 167-residue chain is MANHPLTLEKDGFIVTTLDAAMAAAQKNSLWYMTFGLACCAVEMMHAAGARYDMDRFGMIPRASPRQCDLMIVAGTLTNKMAPAMRRVYDQMAEPRYVVSMGSCANGGGYYHYSYSVVRGCDRIVPVDVYVPGCPPTAEALVYGLMQLQRKVAERSTHSRPKLFARP.

[4Fe-4S] cluster contacts are provided by C39, C40, C104, and C134.

It belongs to the complex I 20 kDa subunit family. In terms of assembly, NDH-1 is composed of 14 different subunits. Subunits NuoB, C, D, E, F, and G constitute the peripheral sector of the complex. Requires [4Fe-4S] cluster as cofactor.

It localises to the cell inner membrane. It carries out the reaction a quinone + NADH + 5 H(+)(in) = a quinol + NAD(+) + 4 H(+)(out). NDH-1 shuttles electrons from NADH, via FMN and iron-sulfur (Fe-S) centers, to quinones in the respiratory chain. Couples the redox reaction to proton translocation (for every two electrons transferred, four hydrogen ions are translocated across the cytoplasmic membrane), and thus conserves the redox energy in a proton gradient. This chain is NADH-quinone oxidoreductase subunit B 2, found in Burkholderia mallei (strain NCTC 10247).